The chain runs to 231 residues: Large ribosomal subunit protein uL1 (231 aa).

Belongs to the universal ribosomal protein uL1 family. Part of the 50S ribosomal subunit.

In terms of biological role, binds directly to 23S rRNA. The L1 stalk is quite mobile in the ribosome, and is involved in E site tRNA release. Its function is as follows. Protein L1 is also a translational repressor protein, it controls the translation of the L11 operon by binding to its mRNA. This is Large ribosomal subunit protein uL1 from Ralstonia nicotianae (strain ATCC BAA-1114 / GMI1000) (Ralstonia solanacearum).